The following is a 392-amino-acid chain: Iripin-1 (392 aa).

The signal sequence occupies residues 1 to 16 (MKPLVPLLFLLVSCRA). 3 N-linked (GlcNAc...) asparagine glycosylation sites follow: N104, N196, and N265.

Belongs to the serpin family. In terms of assembly, interacts with human KLKB1. Interacts with human ST14. Interacts with human PLG (plasmin). As to expression, highly expressed in salivary gland. Expressed in midgut and ovary.

Its subcellular location is the secreted. Its function is as follows. Serine protease inhibitor that modulates blood feeding of ticks on vertebrate species. Modestly inhibits human trypsin, plasma kallikrein (KLKB1), matriptase (ST14) and plasmin (PLG) via a classic serpin inhibitory mechanism. Modestly reduces enzymatic activity of human alpha-chymotrypsin, coagulation factor Xa (F10), factor XIIa (F12), cathepsin G (CTSG), tPA/tissue-type plasminogen activator (PLAT) and uPA/urokinase-type plasminogen activator (PLAU). Probably acts as a substrate rather than an inhibitor for the human neutrophil elastase (ELANE) and thus reduces its enzymatic activity in in vitro assays. Decreases expression of adhesion molecules VCAM1 and CD99 on the surface of human cells. Increases the production of chemokines for neutrophils and monocytes, such as KC/CXCL1, MIP-2/CXCL2 and MIP-1/CCL2, and anti-inflammatory cytokine IL10 in mouse inflammation models. Reduces the recruitment of mouse neutrophils and monocytes to the site of inflammation. Decreases expression of CXCR2 on the surface of mouse neutrophils. Increases expression of integrin ITGAM/ITGB2 on the surface of mouse neutrophils. The protein is Iripin-1 of Ixodes ricinus (Common tick).